A 381-amino-acid polypeptide reads, in one-letter code: Pre-mRNA-splicing factor cwf28 (381 aa).

The tract at residues 1-21 (MKRKAVLEAFSDSEDEDEKKL) is disordered. Residues Ser-11 and Ser-13 each carry the phosphoserine modification. The stretch at 104-157 (AADNEIVDWKANNSNEKAQNKIATNKESTDILPEEVQLVLNDLNDDVKSANSAN) forms a coiled coil. The tract at residues 262 to 381 (LNSQNEHTEV…DRSYRSTRTL (120 aa)) is disordered. The segment covering 274–285 (KSNSIDNLTPSS) has biased composition (polar residues). Ser-275 and Ser-277 each carry phosphoserine. Basic and acidic residues-rich tracts occupy residues 287 to 297 (LFRKRSRDNNL), 306 to 332 (KHLDYNSRNYNKRDRDPDRTKYREYHS), and 362 to 375 (SDRYTERENPDRSY).

This sequence belongs to the SPP2 family. As to quaternary structure, belongs to the 40S cdc5-associated complex (or cwf complex), a spliceosome sub-complex reminiscent of a late-stage spliceosome composed of the U2, U5 and U6 snRNAs and at least brr2, cdc5, cwf2/prp3, cwf3/syf1, cwf4/syf3, cwf5/ecm2, spp42/cwf6, cwf7/spf27, cwf8, cwf9, cwf10, cwf11, cwf12, prp45/cwf13, cwf14, cwf15, cwf16, cwf17, cwf18, cwf19, cwf20, cwf21, cwf22, cwf23, cwf24, cwf25, cwf26, cyp7/cwf27, cwf28, cwf29/ist3, lea1, msl1, prp5/cwf1, prp10, prp12/sap130, prp17, prp22, sap61, sap62, sap114, sap145, slu7, smb1, smd1, smd3, smf1, smg1 and syf2.

Its subcellular location is the nucleus. In terms of biological role, involved in spliceosome maturation and the first step of pre-mRNA splicing. The protein is Pre-mRNA-splicing factor cwf28 (cwf28) of Schizosaccharomyces pombe (strain 972 / ATCC 24843) (Fission yeast).